Consider the following 209-residue polypeptide: Glutathione S-transferase 1-1 (209 aa).

In terms of domain architecture, GST N-terminal spans 1 to 81 (MADFYYLPGS…YLVEKYGKTD (81 aa)). Glutathione-binding positions include Ser10, 51 to 53 (HTI), and 65 to 67 (ESR). One can recognise a GST C-terminal domain in the interval 87–209 (CPKKRAVINQ…GCLEFKKYFE (123 aa)).

It belongs to the GST superfamily. Theta family. Homodimer.

It carries out the reaction RX + glutathione = an S-substituted glutathione + a halide anion + H(+). The catalysed reaction is 1,1,1-trichloro-2,2-bis(4-chlorophenyl)ethane = 1,1-dichloro-2,2-bis(4-chlorophenyl)ethylene + chloride + H(+). Functionally, conjugation of reduced glutathione to a wide number of exogenous and endogenous hydrophobic electrophiles. Has DDT dehydrochlorinase activity. This is Glutathione S-transferase 1-1 (GstD1) from Drosophila simulans (Fruit fly).